The following is a 145-amino-acid chain: Ribonuclease H (145 aa).

Residues 2–143 (SKKEVIIYTD…ADSLARKAII (142 aa)) form the RNase H type-1 domain. Residues D11, E49, D71, and D135 each contribute to the Mg(2+) site.

The protein belongs to the RNase H family. As to quaternary structure, monomer. Requires Mg(2+) as cofactor.

It is found in the cytoplasm. It carries out the reaction Endonucleolytic cleavage to 5'-phosphomonoester.. Endonuclease that specifically degrades the RNA of RNA-DNA hybrids. This is Ribonuclease H from Wolbachia pipientis wMel.